Reading from the N-terminus, the 134-residue chain is Small ribosomal subunit protein bS6 (134 aa).

Residues 99 to 134 (EPSAMMQKRDRDERKDRERGRRRDDDGYVGERNEEG) form a disordered region. The span at 105 to 134 (QKRDRDERKDRERGRRRDDDGYVGERNEEG) shows a compositional bias: basic and acidic residues.

The protein belongs to the bacterial ribosomal protein bS6 family.

Its function is as follows. Binds together with bS18 to 16S ribosomal RNA. The sequence is that of Small ribosomal subunit protein bS6 from Methylobacterium sp. (strain 4-46).